The following is a 255-amino-acid chain: Triosephosphate isomerase (255 aa).

Residue 9-11 (NWK) participates in substrate binding. The active-site Electrophile is His95. Glu167 (proton acceptor) is an active-site residue. Substrate is bound by residues Gly173, Ser212, and 233 to 234 (GG).

This sequence belongs to the triosephosphate isomerase family. In terms of assembly, homodimer.

The protein localises to the cytoplasm. It catalyses the reaction D-glyceraldehyde 3-phosphate = dihydroxyacetone phosphate. It participates in carbohydrate biosynthesis; gluconeogenesis. Its pathway is carbohydrate degradation; glycolysis; D-glyceraldehyde 3-phosphate from glycerone phosphate: step 1/1. Its function is as follows. Involved in the gluconeogenesis. Catalyzes stereospecifically the conversion of dihydroxyacetone phosphate (DHAP) to D-glyceraldehyde-3-phosphate (G3P). The chain is Triosephosphate isomerase from Salmonella agona (strain SL483).